The sequence spans 205 residues: NADH-quinone oxidoreductase subunit C (205 aa).

Belongs to the complex I 30 kDa subunit family. As to quaternary structure, NDH-1 is composed of 14 different subunits. Subunits NuoB, C, D, E, F, and G constitute the peripheral sector of the complex.

The protein resides in the cell inner membrane. It catalyses the reaction a quinone + NADH + 5 H(+)(in) = a quinol + NAD(+) + 4 H(+)(out). In terms of biological role, NDH-1 shuttles electrons from NADH, via FMN and iron-sulfur (Fe-S) centers, to quinones in the respiratory chain. The immediate electron acceptor for the enzyme in this species is believed to be ubiquinone. Couples the redox reaction to proton translocation (for every two electrons transferred, four hydrogen ions are translocated across the cytoplasmic membrane), and thus conserves the redox energy in a proton gradient. The sequence is that of NADH-quinone oxidoreductase subunit C from Nitrosospira multiformis (strain ATCC 25196 / NCIMB 11849 / C 71).